The sequence spans 123 residues: Large ribosomal subunit protein bL12 (123 aa).

This sequence belongs to the bacterial ribosomal protein bL12 family. Homodimer. Part of the ribosomal stalk of the 50S ribosomal subunit. Forms a multimeric L10(L12)X complex, where L10 forms an elongated spine to which 2 to 4 L12 dimers bind in a sequential fashion. Binds GTP-bound translation factors.

Its function is as follows. Forms part of the ribosomal stalk which helps the ribosome interact with GTP-bound translation factors. Is thus essential for accurate translation. In Clostridium kluyveri (strain NBRC 12016), this protein is Large ribosomal subunit protein bL12.